Consider the following 729-residue polypeptide: DNA topoisomerase 3 (729 aa).

The Toprim domain occupies 3 to 136; it reads KSVVIAEKPS…IKRLWISSVT (134 aa). The Mg(2+) site is built by Glu9 and Asp105. A Topo IA-type catalytic domain is found at 153–594; sequence YDNLYASAVA…EMKNYTKEIV (442 aa). Residues 187 to 192 form an interaction with DNA region; sequence NCGRVQ. Tyr310 serves as the catalytic O-(5'-phospho-DNA)-tyrosine intermediate. Positions 686 to 713 are enriched in basic and acidic residues; sequence ERRKKESGNKADKRDVQKYMKQQNKEEE. The interval 686-719 is disordered; sequence ERRKKESGNKADKRDVQKYMKQQNKEEEPLNNPF.

The protein belongs to the type IA topoisomerase family. Mg(2+) is required as a cofactor.

The catalysed reaction is ATP-independent breakage of single-stranded DNA, followed by passage and rejoining.. In terms of biological role, releases the supercoiling and torsional tension of DNA, which is introduced during the DNA replication and transcription, by transiently cleaving and rejoining one strand of the DNA duplex. Introduces a single-strand break via transesterification at a target site in duplex DNA. The scissile phosphodiester is attacked by the catalytic tyrosine of the enzyme, resulting in the formation of a DNA-(5'-phosphotyrosyl)-enzyme intermediate and the expulsion of a 3'-OH DNA strand. The free DNA strand then undergoes passage around the unbroken strand, thus removing DNA supercoils. Finally, in the religation step, the DNA 3'-OH attacks the covalent intermediate to expel the active-site tyrosine and restore the DNA phosphodiester backbone. This is DNA topoisomerase 3 from Bacillus cereus (strain ATCC 14579 / DSM 31 / CCUG 7414 / JCM 2152 / NBRC 15305 / NCIMB 9373 / NCTC 2599 / NRRL B-3711).